Here is a 94-residue protein sequence, read N- to C-terminus: RING finger protein Z (94 aa).

A disordered region spans residues 1–22 (MGNCNKPPKRPPNTQTSAAQPS). The N-myristoyl glycine; by host moiety is linked to residue Gly2. An RING-type; atypical zinc finger spans residues 39–75 (CKCCWFADTNLITCNDHYLCLRCHQTMLRNSELCHIC). A PTAP/PSAP motif motif is present at residues 89 to 92 (PSAP).

Belongs to the arenaviridae Z protein family. In terms of assembly, interacts with protein NP; this interaction probably directs the encapsidated genome to budding sites. Interacts (via RING domain) with polymerase L; this interaction inhibits viral transcription and replication, Z partially blocks the product exit tunnel for the releasing nascent RNA product. Interacts with the glycoprotein complex; this interaction plays a role in virion budding. Interacts with host eIF4E; this interaction results in eIF4E reduced affinity for its substrate, the 5'-m7 G cap structure. Interacts (via late-budding domain) with host TSG101; this interaction is essential for budding and release of viral particles. Interacts with host RPLP0; this interaction may serve to load ribosome-like particles inside the virion. Interacts with host PML; this interaction induces PML bodies redistribution in the cytoplasm upon viral infection. Myristoylation is required for the role of RING finger protein Z in assembly and budding.

It is found in the virion. It localises to the host cytoplasm. The protein localises to the host perinuclear region. The protein resides in the host cell membrane. Functionally, plays a crucial role in virion assembly and budding. Expressed late in the virus life cycle, it acts as an inhibitor of viral transcription and RNA synthesis by interacting with the viral polymerase L. Presumably recruits the NP encapsidated genome to cellular membranes at budding sites via direct interaction with NP. Plays critical roles in the final steps of viral release by interacting with host TSG101, a member of the vacuolar protein-sorting pathway and using other cellular host proteins involved in vesicle formation pathway. The budding of the virus progeny occurs after association of protein Z with the viral glycoprotein complex SSP-GP1-GP2 at the cell periphery, step that requires myristoylation of protein Z. Also selectively represses protein production by associating with host eIF4E. In cell-based minigenome assay, has an inhibitory effect on the ribonucleoprotein machinery (vRNP), which is responsible for the replication and transcription of the viral genome. The sequence is that of RING finger protein Z from Calomys callosus (Large vesper mouse).